A 424-amino-acid polypeptide reads, in one-letter code: MAKNIQAIRGMNDYLPGETAIWQRIEGTLKNVLGSYGYSEIRLPIVEQTPLFKRAIGEVTDVVEKEMYTFEDRNGDSLTLRPEGTAGCVRAGIEHGLLYNQEQRLWYIGPMFRHERPQKGRYRQFHQLGAEVFGLQGPDIDAELIMLTARWWRALGISEHVSLELNSIGSLEARANYRDALVAFLEQHQETLDEDCKRRMYTNPLRVLDSKNPDVQALLNDAPVLGDYLDDDSREHFTGLCKLLDAAGIAYTVNQRLVRGLDYYNRTVFEWVTNSLGSQGTVCAGGRYDGLVEQLGGRATPAVGFAMGLERLVLLVQAVNPEFIASPVVDIYLVAAGAQTQSAAMTLAERLRDEMPGVKLMTNHGGGNFKKQFARADKWGARIALVLGESEVADGTVVVKDLRSGEQTAVAQDSVAAHLRTLLG.

The protein belongs to the class-II aminoacyl-tRNA synthetase family. As to quaternary structure, homodimer.

It is found in the cytoplasm. It catalyses the reaction tRNA(His) + L-histidine + ATP = L-histidyl-tRNA(His) + AMP + diphosphate + H(+). This Salmonella paratyphi A (strain ATCC 9150 / SARB42) protein is Histidine--tRNA ligase.